A 228-amino-acid chain; its full sequence is UPF0758 protein CKR_0778 (228 aa).

Residues 106 to 228 enclose the MPN domain; that stretch reads RICSPQDAAV…FISLKEKGIL (123 aa). Positions 177, 179, and 190 each coordinate Zn(2+). A JAMM motif motif is present at residues 177–190; sequence HNHPSGDPSPSNED.

The protein belongs to the UPF0758 family.

This chain is UPF0758 protein CKR_0778, found in Clostridium kluyveri (strain NBRC 12016).